Reading from the N-terminus, the 85-residue chain is UPF0181 protein YE1782 (85 aa).

Disordered regions lie at residues 1–22 and 57–85; these read MLAG…RIHQ and DTDF…PYEG. Residues 9 to 21 are compositionally biased toward basic and acidic residues; the sequence is SHEEQQEAVERIH. Acidic residues predominate over residues 74-85; sequence QDADEIEDPYEG.

It belongs to the UPF0181 family.

This is UPF0181 protein YE1782 from Yersinia enterocolitica serotype O:8 / biotype 1B (strain NCTC 13174 / 8081).